The following is a 1070-amino-acid chain: uncharacterized protein (1070 aa).

Positions Leu477–Glu523 constitute a UBA domain.

This is an uncharacterized protein from Sulfolobus islandicus rod-shaped virus 1 (SIRV-1).